A 410-amino-acid chain; its full sequence is LL-diaminopimelate aminotransferase (410 aa).

Residues tyrosine 15 and glycine 42 each contribute to the substrate site. Pyridoxal 5'-phosphate is bound by residues tyrosine 72, 108–109, tyrosine 132, asparagine 187, tyrosine 218, and 246–248; these read SK and SFS. Substrate contacts are provided by lysine 109, tyrosine 132, and asparagine 187. An N6-(pyridoxal phosphate)lysine modification is found at lysine 249. 2 residues coordinate pyridoxal 5'-phosphate: arginine 257 and asparagine 292. Positions 292 and 388 each coordinate substrate.

It belongs to the class-I pyridoxal-phosphate-dependent aminotransferase family. LL-diaminopimelate aminotransferase subfamily. As to quaternary structure, homodimer. It depends on pyridoxal 5'-phosphate as a cofactor.

It carries out the reaction (2S,6S)-2,6-diaminopimelate + 2-oxoglutarate = (S)-2,3,4,5-tetrahydrodipicolinate + L-glutamate + H2O + H(+). Its pathway is amino-acid biosynthesis; L-lysine biosynthesis via DAP pathway; LL-2,6-diaminopimelate from (S)-tetrahydrodipicolinate (aminotransferase route): step 1/1. Functionally, involved in the synthesis of meso-diaminopimelate (m-DAP or DL-DAP), required for both lysine and peptidoglycan biosynthesis. Catalyzes the direct conversion of tetrahydrodipicolinate to LL-diaminopimelate. The protein is LL-diaminopimelate aminotransferase of Geobacter metallireducens (strain ATCC 53774 / DSM 7210 / GS-15).